We begin with the raw amino-acid sequence, 624 residues long: Probable potassium transport system protein Kup 1 (624 aa).

Transmembrane regions (helical) follow at residues 10-30, 48-68, 94-114, 133-153, 159-179, 210-230, 242-262, 270-290, 331-351, 363-383, 388-408, and 413-433; these read LALGALGVVFGDIGTSPLYAL, LSLIFWSLIIVVSFKYLMIIF, PLFYIVAIFGAGLLLGDGMLT, LYPYVLPIASLILILLFSLQA, IGYLFGPLILVWFITIAILGI, LLLGGIFLVVTGGEALFADIG, FFAALPCLLLNYFGQGANLIV, PFFMIAPSWFYLPLIIIATVA, IYVPQINFILFIGTMAFCLAF, IAVNLEMLLVDAMVAYAAISI, IFNVMFLFGLFLLIDLAFLGA, and FITGGWVPIVLAFFIAFIMYS.

The protein belongs to the HAK/KUP transporter (TC 2.A.72) family.

Its subcellular location is the cell inner membrane. It carries out the reaction K(+)(in) + H(+)(in) = K(+)(out) + H(+)(out). In terms of biological role, transport of potassium into the cell. Likely operates as a K(+):H(+) symporter. In Legionella pneumophila (strain Lens), this protein is Probable potassium transport system protein Kup 1.